Reading from the N-terminus, the 427-residue chain is Trigger factor (427 aa).

The PPIase FKBP-type domain maps to 163–248 (GNIAIIDFKG…VKGIKVKELP (86 aa)).

It belongs to the FKBP-type PPIase family. Tig subfamily.

It localises to the cytoplasm. It carries out the reaction [protein]-peptidylproline (omega=180) = [protein]-peptidylproline (omega=0). Its function is as follows. Involved in protein export. Acts as a chaperone by maintaining the newly synthesized protein in an open conformation. Functions as a peptidyl-prolyl cis-trans isomerase. The polypeptide is Trigger factor (Clostridium botulinum (strain Alaska E43 / Type E3)).